Here is a 424-residue protein sequence, read N- to C-terminus: O-methyltransferase aunD (424 aa).

Aspartate 275 contacts S-adenosyl-L-methionine. Histidine 326 acts as the Proton acceptor in catalysis.

It belongs to the class I-like SAM-binding methyltransferase superfamily. Cation-independent O-methyltransferase family.

It functions in the pathway secondary metabolite biosynthesis. O-methyltransferase; part of the gene cluster that mediates the biosynthesis of aurasperone B, a dimeric gamma-naphthopyrone. The first step in the biosynthesis of aurasperone B is the production of gamma-naphthopyrone precursor YWA1 by the non-reducing polyketide synthase albA, via condensation of one acetyl-CoA starter unit with 6 malonyl-CoA units. YWA1 is then methylated by aunE at position C-6 to yield foncesin which is further methylated at position C-8 by aunD to produce fonsecin B. A key enzyme in the biosynthetic pathway is the cytochrome P450 monooxygenase aunB which catalyzes the oxidative dimerization of fonsecin B to aurasperone B. AunB also catalyzes the oxidative dimerization of rubrofusarin B into aurasperone A. The polypeptide is O-methyltransferase aunD (Aspergillus niger (strain ATCC 1015 / CBS 113.46 / FGSC A1144 / LSHB Ac4 / NCTC 3858a / NRRL 328 / USDA 3528.7)).